Consider the following 255-residue polypeptide: Large ribosomal subunit protein uL4 (255 aa).

The protein belongs to the universal ribosomal protein uL4 family. Part of the 50S ribosomal subunit.

In terms of biological role, one of the primary rRNA binding proteins, this protein initially binds near the 5'-end of the 23S rRNA. It is important during the early stages of 50S assembly. It makes multiple contacts with different domains of the 23S rRNA in the assembled 50S subunit and ribosome. Its function is as follows. Forms part of the polypeptide exit tunnel. In Thermoplasma volcanium (strain ATCC 51530 / DSM 4299 / JCM 9571 / NBRC 15438 / GSS1), this protein is Large ribosomal subunit protein uL4.